Consider the following 60-residue polypeptide: Potassium channel toxin alpha-KTx 12.7 (60 aa).

Residues 1 to 22 (MSNMPVLIITLLLFSMYISTAA) form the signal peptide. Disulfide bonds link C30–C51, C36–C56, and C40–C58.

The protein belongs to the short scorpion toxin superfamily. Potassium channel inhibitor family. Alpha-KTx 12 subfamily. Expressed by the venom gland.

It is found in the secreted. In terms of biological role, inhibits voltage-gated potassium channels. This chain is Potassium channel toxin alpha-KTx 12.7, found in Lychas mucronatus (Chinese swimming scorpion).